The primary structure comprises 453 residues: Secreted triacylglycerol lipase LIP3 (453 aa).

The N-terminal stretch at 1–19 (MKLGIVAFTLISFAAQALA) is a signal peptide. N-linked (GlcNAc...) asparagine glycosylation is present at Asn-98. A disulfide bridge links Cys-115 with Cys-284. The active-site Nucleophile is the Ser-197. N-linked (GlcNAc...) asparagine glycosylation occurs at Asn-230. Residues Asp-344 and His-378 contribute to the active site. Cys-360 and Cys-406 are disulfide-bonded.

This sequence belongs to the AB hydrolase superfamily. Lipase family. Class Lip subfamily.

The protein localises to the secreted. Its subcellular location is the cell wall. It catalyses the reaction a triacylglycerol + H2O = a diacylglycerol + a fatty acid + H(+). The enzyme catalyses a monoacylglycerol + H2O = glycerol + a fatty acid + H(+). The catalysed reaction is a diacylglycerol + H2O = a monoacylglycerol + a fatty acid + H(+). Its function is as follows. Secreted lipase involved in Dandruff and seborrheic dermatitis (D/SD) probably via lipase-mediated breakdown of sebaceous lipids and release of irritating free fatty acids. Has triacylglycerol lipase activity and is able to hydrolyze triolein, tristearin, trilinolein, tripalmitoylglycerol and trihexadecenoin. Hydrolyzes diacylglycerols such as distearin, dilinolein, dipalmitoylglycerol and dipalmitolein. Mostly converts monoolein to di- and triolein, while free fatty acids are only produced in low amounts. The polypeptide is Secreted triacylglycerol lipase LIP3 (Malassezia globosa (strain ATCC MYA-4612 / CBS 7966) (Dandruff-associated fungus)).